We begin with the raw amino-acid sequence, 171 residues long: ATP synthase subunit b (171 aa).

A helical membrane pass occupies residues 2–22; it reads FVVKMVLGFLILLSPLCATGL.

Belongs to the ATPase B chain family. F-type ATPases have 2 components, F(1) - the catalytic core - and F(0) - the membrane proton channel. F(1) has five subunits: alpha(3), beta(3), gamma(1), delta(1), epsilon(1). F(0) has three main subunits: a(1), b(2) and c(10-14). The alpha and beta chains form an alternating ring which encloses part of the gamma chain. F(1) is attached to F(0) by a central stalk formed by the gamma and epsilon chains, while a peripheral stalk is formed by the delta and b chains.

The protein localises to the cell inner membrane. Its function is as follows. F(1)F(0) ATP synthase produces ATP from ADP in the presence of a proton or sodium gradient. F-type ATPases consist of two structural domains, F(1) containing the extramembraneous catalytic core and F(0) containing the membrane proton channel, linked together by a central stalk and a peripheral stalk. During catalysis, ATP synthesis in the catalytic domain of F(1) is coupled via a rotary mechanism of the central stalk subunits to proton translocation. Component of the F(0) channel, it forms part of the peripheral stalk, linking F(1) to F(0). This Helicobacter pylori (strain ATCC 700392 / 26695) (Campylobacter pylori) protein is ATP synthase subunit b.